The following is a 90-amino-acid chain: DNA-binding protein HU-1 (90 aa).

Phosphothreonine is present on Thr-4.

This sequence belongs to the bacterial histone-like protein family. In terms of assembly, homodimer.

In terms of biological role, histone-like DNA-binding protein which is capable of wrapping DNA to stabilize it, and thus to prevent its denaturation under extreme environmental conditions. The sequence is that of DNA-binding protein HU-1 (hup2) from Halalkalibacterium halodurans (strain ATCC BAA-125 / DSM 18197 / FERM 7344 / JCM 9153 / C-125) (Bacillus halodurans).